The sequence spans 222 residues: Phosphoribosylformylglycinamidine synthase subunit PurQ (222 aa).

The 220-residue stretch at 3–222 folds into the Glutamine amidotransferase type-1 domain; sequence AAVVVFPGSN…RALTGALAAV (220 aa). Cysteine 86 serves as the catalytic Nucleophile. Catalysis depends on residues histidine 194 and glutamate 196.

Part of the FGAM synthase complex composed of 1 PurL, 1 PurQ and 2 PurS subunits.

Its subcellular location is the cytoplasm. It catalyses the reaction N(2)-formyl-N(1)-(5-phospho-beta-D-ribosyl)glycinamide + L-glutamine + ATP + H2O = 2-formamido-N(1)-(5-O-phospho-beta-D-ribosyl)acetamidine + L-glutamate + ADP + phosphate + H(+). The catalysed reaction is L-glutamine + H2O = L-glutamate + NH4(+). It functions in the pathway purine metabolism; IMP biosynthesis via de novo pathway; 5-amino-1-(5-phospho-D-ribosyl)imidazole from N(2)-formyl-N(1)-(5-phospho-D-ribosyl)glycinamide: step 1/2. Its function is as follows. Part of the phosphoribosylformylglycinamidine synthase complex involved in the purines biosynthetic pathway. Catalyzes the ATP-dependent conversion of formylglycinamide ribonucleotide (FGAR) and glutamine to yield formylglycinamidine ribonucleotide (FGAM) and glutamate. The FGAM synthase complex is composed of three subunits. PurQ produces an ammonia molecule by converting glutamine to glutamate. PurL transfers the ammonia molecule to FGAR to form FGAM in an ATP-dependent manner. PurS interacts with PurQ and PurL and is thought to assist in the transfer of the ammonia molecule from PurQ to PurL. The chain is Phosphoribosylformylglycinamidine synthase subunit PurQ from Roseobacter denitrificans (strain ATCC 33942 / OCh 114) (Erythrobacter sp. (strain OCh 114)).